A 190-amino-acid polypeptide reads, in one-letter code: Homeobox protein SEBOX (190 aa).

The span at 1-11 (MPSPVDASSAD) shows a compositional bias: low complexity. 2 disordered regions span residues 1–24 (MPSPVDASSADGGSGLGSHRRKRT) and 82–161 (ILSP…VHPS). Residues 19 to 78 (HRRKRTTFSKGQLLELERAFAAWPYPNISTHEHLAWVTCLPEAKVQVWFQKRWAKIIKNR) constitute a DNA-binding region (homeobox). Over residues 89–100 (CPQSSCSLPDTL) the composition is skewed to polar residues.

Belongs to the paired homeobox family.

It localises to the nucleus. Probable transcription factor involved in the control of specification of mesoderm and endoderm. This Homo sapiens (Human) protein is Homeobox protein SEBOX (SEBOX).